The chain runs to 436 residues: GTPase Der (436 aa).

EngA-type G domains are found at residues 4–167 (PVIA…PKIE) and 176–351 (IRFS…ESHS). Residues 10–17 (GRPNVGKS), 57–61 (DTGGI), 119–122 (NKVD), 182–189 (GRPNVGKS), 229–233 (DTAGM), and 294–297 (NKWD) each bind GTP. Residues 352-436 (IRVQTNVLND…PIHIIARARD (85 aa)) enclose the KH-like domain.

The protein belongs to the TRAFAC class TrmE-Era-EngA-EngB-Septin-like GTPase superfamily. EngA (Der) GTPase family. In terms of assembly, associates with the 50S ribosomal subunit.

Functionally, GTPase that plays an essential role in the late steps of ribosome biogenesis. This Bacillus cereus (strain G9842) protein is GTPase Der.